We begin with the raw amino-acid sequence, 390 residues long: GTPase Obg (390 aa).

The Obg domain maps to Met1 to Leu159. The region spanning Ala160 to Glu333 is the OBG-type G domain. Residues Gly166–Ser173, Phe191–Ile195, Asp213–Gly216, Asn283–Asp286, and Ser314–Val316 each bind GTP. Mg(2+) is bound by residues Ser173 and Thr193.

It belongs to the TRAFAC class OBG-HflX-like GTPase superfamily. OBG GTPase family. In terms of assembly, monomer. It depends on Mg(2+) as a cofactor.

Its subcellular location is the cytoplasm. Functionally, an essential GTPase which binds GTP, GDP and possibly (p)ppGpp with moderate affinity, with high nucleotide exchange rates and a fairly low GTP hydrolysis rate. Plays a role in control of the cell cycle, stress response, ribosome biogenesis and in those bacteria that undergo differentiation, in morphogenesis control. The protein is GTPase Obg of Vibrio atlanticus (strain LGP32) (Vibrio splendidus (strain Mel32)).